The sequence spans 405 residues: Tryptophan synthase beta chain (405 aa).

Lysine 98 bears the N6-(pyridoxal phosphate)lysine mark.

This sequence belongs to the TrpB family. As to quaternary structure, tetramer of two alpha and two beta chains. Pyridoxal 5'-phosphate is required as a cofactor.

It catalyses the reaction (1S,2R)-1-C-(indol-3-yl)glycerol 3-phosphate + L-serine = D-glyceraldehyde 3-phosphate + L-tryptophan + H2O. It participates in amino-acid biosynthesis; L-tryptophan biosynthesis; L-tryptophan from chorismate: step 5/5. In terms of biological role, the beta subunit is responsible for the synthesis of L-tryptophan from indole and L-serine. The chain is Tryptophan synthase beta chain from Parvibaculum lavamentivorans (strain DS-1 / DSM 13023 / NCIMB 13966).